The chain runs to 148 residues: Wheatwin-2 (148 aa).

The first 23 residues, 1 to 23 (MTMAARLMLVAALLCAAAAAATA), serve as a signal peptide directing secretion. Gln24 carries the post-translational modification Pyrrolidone carboxylic acid. In terms of domain architecture, Barwin spans 24-148 (QQATNVRATY…VNYQFVDCRD (125 aa)). Cystine bridges form between Cys54–Cys86, Cys75–Cys109, and Cys89–Cys146.

Monomer.

Functionally, shows antifungal activity towards B.cinerea and towards the wheat-specific pathogenic fungi F.culmorum and F.graminearum (groups 1 and 2). This chain is Wheatwin-2 (PR4B), found in Triticum aestivum (Wheat).